The following is a 274-amino-acid chain: Dermonecrotic toxin SdSicTox-betaIIB2ii (274 aa).

His5 is an active-site residue. 2 residues coordinate Mg(2+): Glu25 and Asp27. The active-site Nucleophile is His41. 2 disulfides stabilise this stretch: Cys45/Cys51 and Cys47/Cys190. Mg(2+) is bound at residue Asp85.

Belongs to the arthropod phospholipase D family. Class II subfamily. Requires Mg(2+) as cofactor. As to expression, expressed by the venom gland.

It localises to the secreted. It carries out the reaction an N-(acyl)-sphingosylphosphocholine = an N-(acyl)-sphingosyl-1,3-cyclic phosphate + choline. The enzyme catalyses an N-(acyl)-sphingosylphosphoethanolamine = an N-(acyl)-sphingosyl-1,3-cyclic phosphate + ethanolamine. It catalyses the reaction a 1-acyl-sn-glycero-3-phosphocholine = a 1-acyl-sn-glycero-2,3-cyclic phosphate + choline. The catalysed reaction is a 1-acyl-sn-glycero-3-phosphoethanolamine = a 1-acyl-sn-glycero-2,3-cyclic phosphate + ethanolamine. Functionally, dermonecrotic toxins cleave the phosphodiester linkage between the phosphate and headgroup of certain phospholipids (sphingolipid and lysolipid substrates), forming an alcohol (often choline) and a cyclic phosphate. This toxin acts on sphingomyelin (SM). It may also act on ceramide phosphoethanolamine (CPE), lysophosphatidylcholine (LPC) and lysophosphatidylethanolamine (LPE), but not on lysophosphatidylserine (LPS), and lysophosphatidylglycerol (LPG). It acts by transphosphatidylation, releasing exclusively cyclic phosphate products as second products. Induces dermonecrosis, hemolysis, increased vascular permeability, edema, inflammatory response, and platelet aggregation. In Sicarius cf. damarensis (strain GJB-2008) (Six-eyed sand spider), this protein is Dermonecrotic toxin SdSicTox-betaIIB2ii.